Here is a 253-residue protein sequence, read N- to C-terminus: Acidic endochitinase pcht28 (253 aa).

The N-terminal stretch at M1–A24 is a signal peptide. E92 acts as the Proton donor in catalysis. A disulfide bridge links C212 with C244.

The protein belongs to the glycosyl hydrolase 19 family. Chitinase class II subfamily.

Its subcellular location is the secreted. The protein resides in the extracellular space. It carries out the reaction Random endo-hydrolysis of N-acetyl-beta-D-glucosaminide (1-&gt;4)-beta-linkages in chitin and chitodextrins.. In terms of biological role, defense against chitin-containing fungal pathogens. The sequence is that of Acidic endochitinase pcht28 from Solanum chilense (Tomato).